A 294-amino-acid chain; its full sequence is S-adenosylmethionine uptake transporter (294 aa).

Transmembrane regions (helical) follow at residues 4 to 24 (ALKT…TSSI), 41 to 61 (VAFF…VYYG), 74 to 91 (VLRG…TYGL), 98 to 118 (TATV…VFIL), 121 to 141 (NIIW…VVML), 148 to 168 (FNPE…LDII), 178 to 198 (MLSM…PVAM), 207 to 227 (FELA…FFLL), 237 to 257 (ATAP…YFIF), and 260 to 280 (FPDK…LFII). EamA domains follow at residues 22 to 141 (SSIN…VVML) and 160 to 280 (ISFA…LFII).

It belongs to the drug/metabolite transporter (DMT) superfamily. 10 TMS drug/metabolite exporter (DME) (TC 2.A.7.3) family.

It localises to the cell inner membrane. Its activity is regulated as follows. Transport is inhibited by S-adenosylethionine and to a lesser extent by S-adenosylhomocysteine. Unlike eukaryotic transporters is not inhibited by sinfungin. Also inhibited by 2.4-dinitrophenol, suggesting transport is an energy-dependent process. Its function is as follows. Transports S-adenosylmethionine. In Rickettsia prowazekii (strain Madrid E), this protein is S-adenosylmethionine uptake transporter (sam).